The sequence spans 143 residues: Anti-sigma F factor (143 aa).

Belongs to the anti-sigma-factor family.

It carries out the reaction L-seryl-[protein] + ATP = O-phospho-L-seryl-[protein] + ADP + H(+). It catalyses the reaction L-threonyl-[protein] + ATP = O-phospho-L-threonyl-[protein] + ADP + H(+). Functionally, binds to sigma F and blocks its ability to form an RNA polymerase holoenzyme (E-sigma F). Phosphorylates SpoIIAA on a serine residue. This phosphorylation may enable SpoIIAA to act as an anti-anti-sigma factor that counteracts SpoIIAB and thus releases sigma F from inhibition. The sequence is that of Anti-sigma F factor from Clostridium botulinum (strain Eklund 17B / Type B).